Reading from the N-terminus, the 180-residue chain is Epididymal-specific lipocalin-6 (180 aa).

The N-terminal stretch at 1 to 20 is a signal peptide; the sequence is MGGLLLAALLALVAVPRAQA. Cysteines 81 and 174 form a disulfide.

This sequence belongs to the calycin superfamily. Lipocalin family.

It is found in the secreted. In terms of biological role, may play a role in male fertility. The chain is Epididymal-specific lipocalin-6 (LCN6) from Macaca mulatta (Rhesus macaque).